The primary structure comprises 265 residues: Undecaprenyl-diphosphatase (265 aa).

Transmembrane regions (helical) follow at residues 38–58 (SDMF…IIYW), 80–100 (LIVA…LGFE), 107–127 (PIAW…WAAA), 135–155 (ITWL…VFPG), 175–195 (AAAT…ASGY), 213–233 (ALAI…KWLL), and 244–264 (FAIY…SGLI).

It belongs to the UppP family.

It is found in the cell inner membrane. The enzyme catalyses di-trans,octa-cis-undecaprenyl diphosphate + H2O = di-trans,octa-cis-undecaprenyl phosphate + phosphate + H(+). Catalyzes the dephosphorylation of undecaprenyl diphosphate (UPP). Confers resistance to bacitracin. In Rhizobium etli (strain CIAT 652), this protein is Undecaprenyl-diphosphatase.